A 163-amino-acid polypeptide reads, in one-letter code: COP9 signalosome complex subunit 9 (163 aa).

Residues 5–120 form the PCI domain; that stretch reads EVLHAVLDPK…SVGRRIKVLR (116 aa).

In terms of assembly, component of a COP9 signalosome-like (CSN) complex.

The protein localises to the cytoplasm. It localises to the nucleus. In terms of biological role, component of the COP9 signalosome (CSN) complex that acts as a regulator of the ubiquitin (Ubl) conjugation pathway by mediating the deneddylation of the cullin subunit of SCF-type E3 ubiquitin-protein ligase complexes. The complex is involved in the regulation of the mating pheromone response. This Eremothecium gossypii (strain ATCC 10895 / CBS 109.51 / FGSC 9923 / NRRL Y-1056) (Yeast) protein is COP9 signalosome complex subunit 9 (CSN9).